The chain runs to 187 residues: Adenylate kinase (187 aa).

ATP is bound at residue 11–16 (GAGKGT). The NMP stretch occupies residues 31-60 (STGDILREAVKNQTPMGIEAKRYMDAGDLV). AMP is bound by residues Thr32, Arg37, 58–60 (DLV), 86–89 (GFPR), and Gln93. The segment at 127–137 (GRAEIEGRADD) is LID. An ATP-binding site is contributed by Arg128. The AMP site is built by Arg134 and Arg145. ATP is bound at residue Gly173.

This sequence belongs to the adenylate kinase family. Monomer.

The protein resides in the cytoplasm. The catalysed reaction is AMP + ATP = 2 ADP. It functions in the pathway purine metabolism; AMP biosynthesis via salvage pathway; AMP from ADP: step 1/1. In terms of biological role, catalyzes the reversible transfer of the terminal phosphate group between ATP and AMP. Plays an important role in cellular energy homeostasis and in adenine nucleotide metabolism. This Leptospira borgpetersenii serovar Hardjo-bovis (strain JB197) protein is Adenylate kinase.